The sequence spans 110 residues: Thiosulfate sulfurtransferase GlpE (110 aa).

Residues 17-105 (RENGAQVVDI…WRSVYPADTS (89 aa)) enclose the Rhodanese domain. The Cysteine persulfide intermediate role is filled by C65.

This sequence belongs to the GlpE family.

The protein resides in the cytoplasm. It catalyses the reaction thiosulfate + hydrogen cyanide = thiocyanate + sulfite + 2 H(+). The catalysed reaction is thiosulfate + [thioredoxin]-dithiol = [thioredoxin]-disulfide + hydrogen sulfide + sulfite + 2 H(+). Transferase that catalyzes the transfer of sulfur from thiosulfate to thiophilic acceptors such as cyanide or dithiols. May function in a CysM-independent thiosulfate assimilation pathway by catalyzing the conversion of thiosulfate to sulfite, which can then be used for L-cysteine biosynthesis. The polypeptide is Thiosulfate sulfurtransferase GlpE (Pseudomonas aeruginosa (strain LESB58)).